Consider the following 60-residue polypeptide: MEKKFLDILVCPVTKGRLEYHQDKQELWSRQAKLAYPIKDGIPYMLENEARPLGEEELEA.

Belongs to the UPF0434 family.

This is UPF0434 protein NMC0623 from Neisseria meningitidis serogroup C / serotype 2a (strain ATCC 700532 / DSM 15464 / FAM18).